A 245-amino-acid polypeptide reads, in one-letter code: 1-(5-phosphoribosyl)-5-[(5-phosphoribosylamino)methylideneamino] imidazole-4-carboxamide isomerase (245 aa).

D7 functions as the Proton acceptor in the catalytic mechanism. D129 functions as the Proton donor in the catalytic mechanism.

Belongs to the HisA/HisF family.

It is found in the cytoplasm. It carries out the reaction 1-(5-phospho-beta-D-ribosyl)-5-[(5-phospho-beta-D-ribosylamino)methylideneamino]imidazole-4-carboxamide = 5-[(5-phospho-1-deoxy-D-ribulos-1-ylimino)methylamino]-1-(5-phospho-beta-D-ribosyl)imidazole-4-carboxamide. It participates in amino-acid biosynthesis; L-histidine biosynthesis; L-histidine from 5-phospho-alpha-D-ribose 1-diphosphate: step 4/9. This Citrobacter koseri (strain ATCC BAA-895 / CDC 4225-83 / SGSC4696) protein is 1-(5-phosphoribosyl)-5-[(5-phosphoribosylamino)methylideneamino] imidazole-4-carboxamide isomerase.